Here is a 37-residue protein sequence, read N- to C-terminus: Albumin-2 (37 aa).

The Hemopexin repeat unit spans residues Ile6–Lys37.

Dimer. As to expression, expressed in seeds (at protein level).

The protein resides in the cytoplasm. The protein localises to the cytosol. In terms of biological role, binds hemin and thiamine. This Lens culinaris (Lentil) protein is Albumin-2.